The following is a 215-amino-acid chain: 3-isopropylmalate dehydratase small subunit (215 aa).

Belongs to the LeuD family. LeuD type 1 subfamily. Heterodimer of LeuC and LeuD.

It catalyses the reaction (2R,3S)-3-isopropylmalate = (2S)-2-isopropylmalate. It participates in amino-acid biosynthesis; L-leucine biosynthesis; L-leucine from 3-methyl-2-oxobutanoate: step 2/4. Catalyzes the isomerization between 2-isopropylmalate and 3-isopropylmalate, via the formation of 2-isopropylmaleate. In Xylella fastidiosa (strain M12), this protein is 3-isopropylmalate dehydratase small subunit.